Consider the following 517-residue polypeptide: Ubiquitin carboxyl-terminal hydrolase 30 (517 aa).

At 1-35 (MLSSRAEAAMTAADRAIQRFLRTGAAVRYKVMKNW) the chain is on the mitochondrial intermembrane side. A helical membrane pass occupies residues 36–56 (GVIGGIAAALAAGIYVIWGPI). Residues 57-517 (TERKKRRKGL…HQSQECKSEE (461 aa)) are Cytoplasmic-facing. In terms of domain architecture, USP spans 68 to 502 (PGLVNLGNTC…SAYLLFYERV (435 aa)). Cys-77 serves as the catalytic Nucleophile. Residues Lys-235 and Lys-289 each participate in a glycyl lysine isopeptide (Lys-Gly) (interchain with G-Cter in ubiquitin) cross-link. The tract at residues 364-395 (SQHNPKLNKNPGPTLELQDGPGAPTPVLNQPG) is disordered. The Proton acceptor role is filled by His-452.

This sequence belongs to the peptidase C19 family. Post-translationally, ubiquitinated by parkin (PRKN) at Lys-235 and Lys-289, leading to its degradation. In terms of tissue distribution, expressed in skeletal muscle, pancreas, liver and kidney.

It is found in the mitochondrion outer membrane. The enzyme catalyses Thiol-dependent hydrolysis of ester, thioester, amide, peptide and isopeptide bonds formed by the C-terminal Gly of ubiquitin (a 76-residue protein attached to proteins as an intracellular targeting signal).. Its activity is regulated as follows. Inhibited by the diterpenoid derivative 15-oxospiramilactone (S3). In terms of biological role, deubiquitinating enzyme tethered to the mitochondrial outer membrane that acts as a key inhibitor of mitophagy by counteracting the action of parkin (PRKN): hydrolyzes ubiquitin attached by parkin on target proteins, such as RHOT1/MIRO1 and TOMM20, thereby blocking parkin's ability to drive mitophagy. Preferentially cleaves 'Lys-6'- and 'Lys-11'-linked polyubiquitin chains, 2 types of linkage that participate in mitophagic signaling. Does not cleave efficiently polyubiquitin phosphorylated at 'Ser-65'. Acts as a negative regulator of mitochondrial fusion by mediating deubiquitination of MFN1 and MFN2. The sequence is that of Ubiquitin carboxyl-terminal hydrolase 30 from Homo sapiens (Human).